The chain runs to 396 residues: L-lactate dehydrogenase (396 aa).

The region spanning M1 to S380 is the FMN hydroxy acid dehydrogenase domain. Y24 provides a ligand contact to substrate. The FMN site is built by S106 and Q127. Y129 contributes to the substrate binding site. Residue T155 participates in FMN binding. R164 contacts substrate. Residue K251 coordinates FMN. The active-site Proton acceptor is the H275. R278 contributes to the substrate binding site. D306–R330 provides a ligand contact to FMN.

This sequence belongs to the FMN-dependent alpha-hydroxy acid dehydrogenase family. The cofactor is FMN.

The protein localises to the cell inner membrane. The enzyme catalyses (S)-lactate + A = pyruvate + AH2. In terms of biological role, catalyzes the conversion of L-lactate to pyruvate. Is coupled to the respiratory chain. The chain is L-lactate dehydrogenase from Escherichia coli (strain SMS-3-5 / SECEC).